Here is a 156-residue protein sequence, read N- to C-terminus: Ribosomal RNA large subunit methyltransferase H (156 aa).

S-adenosyl-L-methionine is bound by residues L73, G104, and 123–128 (LSSLTL).

Belongs to the RNA methyltransferase RlmH family. In terms of assembly, homodimer.

It localises to the cytoplasm. The enzyme catalyses pseudouridine(1915) in 23S rRNA + S-adenosyl-L-methionine = N(3)-methylpseudouridine(1915) in 23S rRNA + S-adenosyl-L-homocysteine + H(+). Its function is as follows. Specifically methylates the pseudouridine at position 1915 (m3Psi1915) in 23S rRNA. This chain is Ribosomal RNA large subunit methyltransferase H, found in Ralstonia nicotianae (strain ATCC BAA-1114 / GMI1000) (Ralstonia solanacearum).